Consider the following 598-residue polypeptide: Elongation factor 4 (598 aa).

One can recognise a tr-type G domain in the interval 2-184 (NNIRNFAIIA…AIVTKLPAPQ (183 aa)). Residues 14–19 (DHGKST) and 131–134 (NKVD) each bind GTP.

This sequence belongs to the TRAFAC class translation factor GTPase superfamily. Classic translation factor GTPase family. LepA subfamily.

The protein resides in the cell membrane. The catalysed reaction is GTP + H2O = GDP + phosphate + H(+). Required for accurate and efficient protein synthesis under certain stress conditions. May act as a fidelity factor of the translation reaction, by catalyzing a one-codon backward translocation of tRNAs on improperly translocated ribosomes. Back-translocation proceeds from a post-translocation (POST) complex to a pre-translocation (PRE) complex, thus giving elongation factor G a second chance to translocate the tRNAs correctly. Binds to ribosomes in a GTP-dependent manner. The polypeptide is Elongation factor 4 (Wolbachia pipientis subsp. Culex pipiens (strain wPip)).